The following is a 304-amino-acid chain: Lipoyl synthase (304 aa).

[4Fe-4S] cluster-binding residues include Cys41, Cys46, Cys52, Cys68, Cys72, Cys75, and Ser281. The 217-residue stretch at 54 to 270 (GARRTATFMI…RKIAMEKGFK (217 aa)) folds into the Radical SAM core domain. Residues 282–304 (YHADEQVNEAAKEKQRQGEEQLN) form a disordered region.

It belongs to the radical SAM superfamily. Lipoyl synthase family. [4Fe-4S] cluster is required as a cofactor.

Its subcellular location is the cytoplasm. The enzyme catalyses [[Fe-S] cluster scaffold protein carrying a second [4Fe-4S](2+) cluster] + N(6)-octanoyl-L-lysyl-[protein] + 2 oxidized [2Fe-2S]-[ferredoxin] + 2 S-adenosyl-L-methionine + 4 H(+) = [[Fe-S] cluster scaffold protein] + N(6)-[(R)-dihydrolipoyl]-L-lysyl-[protein] + 4 Fe(3+) + 2 hydrogen sulfide + 2 5'-deoxyadenosine + 2 L-methionine + 2 reduced [2Fe-2S]-[ferredoxin]. The protein operates within protein modification; protein lipoylation via endogenous pathway; protein N(6)-(lipoyl)lysine from octanoyl-[acyl-carrier-protein]. Catalyzes the radical-mediated insertion of two sulfur atoms into the C-6 and C-8 positions of the octanoyl moiety bound to the lipoyl domains of lipoate-dependent enzymes, thereby converting the octanoylated domains into lipoylated derivatives. The chain is Lipoyl synthase from Staphylococcus epidermidis (strain ATCC 35984 / DSM 28319 / BCRC 17069 / CCUG 31568 / BM 3577 / RP62A).